Reading from the N-terminus, the 452-residue chain is MSKKKSNSGLRFQPAGGNRTPQVPVGKKQRLDIERLAGDGRGIAFLDGRTWFVSGALAGEAVEARVLNARGKVVEARLERLLQAAPERREAPCRYYDRCGGCNLQHLPHEAQLALKQRTLAEQLQRVAGVQPEAWAAPLSGPEFGYRRRARVAVRWDVKARQLEVGFRAEASQDIIAIDDCAVLVQPLQSILRHLPTVLRSLSKPQALGHVELFSGTAEAVLVRHVAPLPAEDQARLQAFCEQANAQLWLQGEGEPAPVDPAAQLGFALAPWQLELAWRPGDFVQVNAQVNTAMIEQALAWLAPQADERVLDLFCGLGNFALPLARQAREVVAVEGVQAMVDRAAANARNNNVHNARFFQADLSQPLAGTGWAAEGFSAVLLDPPRDGAFEVVQGIARLKARRLVYVSCNPATLARDAQVLVGQGYRLKRAGILDMFPQTAHVEAMALFEAG.

The tract at residues 1-25 (MSKKKSNSGLRFQPAGGNRTPQVPV) is disordered. Positions 22-80 (QVPVGKKQRLDIERLAGDGRGIAFLDGRTWFVSGALAGEAVEARVLNARGKVVEARLER) constitute a TRAM domain. [4Fe-4S] cluster is bound by residues cysteine 93, cysteine 99, cysteine 102, and cysteine 181. 6 residues coordinate S-adenosyl-L-methionine: glutamine 285, phenylalanine 314, asparagine 319, glutamate 335, aspartate 362, and aspartate 383. Catalysis depends on cysteine 409, which acts as the Nucleophile.

It belongs to the class I-like SAM-binding methyltransferase superfamily. RNA M5U methyltransferase family. RlmD subfamily.

The enzyme catalyses uridine(1939) in 23S rRNA + S-adenosyl-L-methionine = 5-methyluridine(1939) in 23S rRNA + S-adenosyl-L-homocysteine + H(+). Functionally, catalyzes the formation of 5-methyl-uridine at position 1939 (m5U1939) in 23S rRNA. This is 23S rRNA (uracil(1939)-C(5))-methyltransferase RlmD from Pseudomonas putida (strain ATCC 47054 / DSM 6125 / CFBP 8728 / NCIMB 11950 / KT2440).